Consider the following 218-residue polypeptide: GEM-like protein 6 (218 aa).

One can recognise a GRAM domain in the interval 96 to 174 (KIYKRLFKVC…CKINGVNQSQ (79 aa)).

The protein belongs to the GEM family.

The protein is GEM-like protein 6 of Arabidopsis thaliana (Mouse-ear cress).